The primary structure comprises 145 residues: Large ribosomal subunit protein uL15 (145 aa).

A disordered region spans residues 1–52; sequence MKLNTIAPAEGSKKDRRRVGRGIGSGFGKTAGRGHKGQHARSGGYHKVGFEG. The span at 21-31 shows a compositional bias: gly residues; sequence RGIGSGFGKTA.

This sequence belongs to the universal ribosomal protein uL15 family. In terms of assembly, part of the 50S ribosomal subunit.

Functionally, binds to the 23S rRNA. The polypeptide is Large ribosomal subunit protein uL15 (Acidithiobacillus ferrooxidans (strain ATCC 53993 / BNL-5-31) (Leptospirillum ferrooxidans (ATCC 53993))).